We begin with the raw amino-acid sequence, 676 residues long: MAPPAAAPELGSCCICLDAITGAARALPCLHAFCLACIRRWLEGRPTCPLCKAPVQSLIHSVASDECFEEIPVGGGPGADGALEPDAAVIWGEDYDAGPIDLTAADGEAPGAGGEAGAAGGSEAGGGAGGAEAAGEARGAGAGRAAGAAGGRAGRGADAAQEFIDRVARGPRLPLLPNTPGHGPGAPYLRRVVEWVEGALVGTFAVTARELAAMTDYVMAMLAECGFDDDGLADAMEPLIGEDDAPAFVRSLLFVAARCVTVGPSHLIPQQSAPPGGRGVVFLDTSDSDSEGSEDDSWSESEESSSGLSTSDLTAIDDTETEPETDAEVESRRTRGASGAARARRPAERQYVSTRGRQTPAVQPAPRSLARRPCGRAAAVSAPPSSRSRGGRRDPRLPAAPRAAPAAQARACSPEPREEGRGAGLGVAAGETAGWGVGSEEGRGERRAKLLGEAGPPRVQARRRRRTELDRAPTPAPAPAPAPAPISTMIDLTANAPARPADPAPAAALGPALAGAQIGTPAAAAAVTAAAAAPSVARGSAPSPAVTAAATGTAAAISTRAPTPSPAGRAPAADPRRAGAPALAGAARAEAGRNGNPGRERRPASAMARGDLDPGPESSAQKRRRTEMEVAAWVRESLLGTPRRSSAALAPQPGGRQGPSLAGLLGRCSGGSAWRQ.

The RING-type zinc-finger motif lies at 13–52; that stretch reads CCICLDAITGAARALPCLHAFCLACIRRWLEGRPTCPLCK. Disordered stretches follow at residues 101–135, 266–486, and 555–676; these read DLTA…EAAG, HLIP…PAPI, and AAIS…AWRQ. Positions 110-135 are enriched in gly residues; that stretch reads PGAGGEAGAAGGSEAGGGAGGAEAAG. Acidic residues predominate over residues 286–303; sequence SDSDSEGSEDDSWSESEE. Positions 304–314 are enriched in low complexity; sequence SSSGLSTSDLT. A compositionally biased stretch (acidic residues) spans 315–328; sequence AIDDTETEPETDAE. A compositionally biased stretch (polar residues) spans 351–361; that stretch reads YVSTRGRQTPA. Low complexity-rich tracts occupy residues 375-388 and 397-411; these read GRAA…SSRS and LPAA…QARA. Residues 422–439 are compositionally biased toward gly residues; that stretch reads GAGLGVAAGETAGWGVGS. A compositionally biased stretch (basic and acidic residues) spans 440–450; the sequence is EEGRGERRAKL. Positions 474–484 are enriched in pro residues; that stretch reads TPAPAPAPAPA. Low complexity predominate over residues 555–597; the sequence is AAISTRAPTPSPAGRAPAADPRRAGAPALAGAARAEAGRNGNP.

Post-translationally, auto-ubiquitinated. In terms of processing, the strongly acidic region might serve as a transcriptional activation domain, possibly regulated through phosphorylation by casein kinase II.

It carries out the reaction S-ubiquitinyl-[E2 ubiquitin-conjugating enzyme]-L-cysteine + [acceptor protein]-L-lysine = [E2 ubiquitin-conjugating enzyme]-L-cysteine + N(6)-ubiquitinyl-[acceptor protein]-L-lysine.. In terms of biological role, evades nuclear antiviral defenses triggered by dsDNA viruses. Acts during the initial stages of lytic infection and the reactivation of latent viral genome. Prevents the antiviral effect of nuclear bodies by degrading host PML and SP100. The chain is E3 ubiquitin-protein ligase ICP0 (BICP0) from Bos taurus (Bovine).